The primary structure comprises 37 residues: Large ribosomal subunit protein bL36c (37 aa).

It belongs to the bacterial ribosomal protein bL36 family.

The protein resides in the plastid. The protein localises to the chloroplast. The polypeptide is Large ribosomal subunit protein bL36c (Angiopteris evecta (Mule's foot fern)).